We begin with the raw amino-acid sequence, 450 residues long: Phosphoglucosamine mutase 2 (450 aa).

Serine 101 acts as the Phosphoserine intermediate in catalysis. Mg(2+) contacts are provided by serine 101, aspartate 245, aspartate 247, and aspartate 249. A Phosphoserine modification is found at serine 101.

It belongs to the phosphohexose mutase family. Mg(2+) serves as cofactor. Activated by phosphorylation.

The catalysed reaction is alpha-D-glucosamine 1-phosphate = D-glucosamine 6-phosphate. Catalyzes the conversion of glucosamine-6-phosphate to glucosamine-1-phosphate. The protein is Phosphoglucosamine mutase 2 of Shewanella sp. (strain MR-7).